A 393-amino-acid polypeptide reads, in one-letter code: NAD(P)H-quinone oxidoreductase subunit H, chloroplastic (393 aa).

This sequence belongs to the complex I 49 kDa subunit family. NDH is composed of at least 16 different subunits, 5 of which are encoded in the nucleus.

It localises to the plastid. It is found in the chloroplast thylakoid membrane. The catalysed reaction is a plastoquinone + NADH + (n+1) H(+)(in) = a plastoquinol + NAD(+) + n H(+)(out). It carries out the reaction a plastoquinone + NADPH + (n+1) H(+)(in) = a plastoquinol + NADP(+) + n H(+)(out). Functionally, NDH shuttles electrons from NAD(P)H:plastoquinone, via FMN and iron-sulfur (Fe-S) centers, to quinones in the photosynthetic chain and possibly in a chloroplast respiratory chain. The immediate electron acceptor for the enzyme in this species is believed to be plastoquinone. Couples the redox reaction to proton translocation, and thus conserves the redox energy in a proton gradient. This Piper cenocladum (Ant piper) protein is NAD(P)H-quinone oxidoreductase subunit H, chloroplastic.